Reading from the N-terminus, the 340-residue chain is Ornithine carbamoyltransferase (340 aa).

Residues 57-60 (STRT), glutamine 84, arginine 108, and 135-138 (HPTQ) contribute to the carbamoyl phosphate site. Residues asparagine 167, aspartate 231, and 235–236 (SM) contribute to the L-ornithine site. Residues 272-273 (CL) and arginine 317 contribute to the carbamoyl phosphate site.

The protein belongs to the aspartate/ornithine carbamoyltransferase superfamily. OTCase family.

The protein localises to the cytoplasm. It carries out the reaction carbamoyl phosphate + L-ornithine = L-citrulline + phosphate + H(+). It participates in amino-acid biosynthesis; L-arginine biosynthesis; L-arginine from L-ornithine and carbamoyl phosphate: step 1/3. Its function is as follows. Reversibly catalyzes the transfer of the carbamoyl group from carbamoyl phosphate (CP) to the N(epsilon) atom of ornithine (ORN) to produce L-citrulline. The chain is Ornithine carbamoyltransferase (argF) from Lactiplantibacillus plantarum (strain ATCC BAA-793 / NCIMB 8826 / WCFS1) (Lactobacillus plantarum).